The primary structure comprises 623 residues: Chaperone protein HtpG (623 aa).

The segment at 1–330 is a; substrate-binding; sequence MIMTQEKKKF…SEDLPLNISR (330 aa). A b region spans residues 331–546; the sequence is ESLQHNSVLE…DAAMDIRMER (216 aa). Residues 477–497 form a disordered region; it reads SDIDVEQTTSQSEEKNTDSKK. Positions 488-497 are enriched in basic and acidic residues; the sequence is SEEKNTDSKK. The interval 547 to 623 is c; that stretch reads FLIEQKQIAN…LNDIVQKAIL (77 aa).

This sequence belongs to the heat shock protein 90 family. As to quaternary structure, homodimer.

The protein resides in the cytoplasm. Its function is as follows. Molecular chaperone. Has ATPase activity. In Rickettsia massiliae (strain Mtu5), this protein is Chaperone protein HtpG.